The chain runs to 166 residues: 2-amino-4-hydroxy-6-hydroxymethyldihydropteridine pyrophosphokinase (166 aa).

This sequence belongs to the HPPK family.

It carries out the reaction 6-hydroxymethyl-7,8-dihydropterin + ATP = (7,8-dihydropterin-6-yl)methyl diphosphate + AMP + H(+). It participates in cofactor biosynthesis; tetrahydrofolate biosynthesis; 2-amino-4-hydroxy-6-hydroxymethyl-7,8-dihydropteridine diphosphate from 7,8-dihydroneopterin triphosphate: step 4/4. In terms of biological role, catalyzes the transfer of pyrophosphate from adenosine triphosphate (ATP) to 6-hydroxymethyl-7,8-dihydropterin, an enzymatic step in folate biosynthesis pathway. The chain is 2-amino-4-hydroxy-6-hydroxymethyldihydropteridine pyrophosphokinase (folK) from Streptococcus pyogenes serotype M18 (strain MGAS8232).